The chain runs to 28 residues: Sarcolamban A (28 aa).

Residues 7 to 27 (LFTTFGILAILLFFLYLIYAV) traverse the membrane as a helical segment.

Interacts with SERCA. Strongly expressed in embryonic and larval somatic muscles and postembryonic heart.

The protein localises to the sarcoplasmic reticulum membrane. Its subcellular location is the cell membrane. It is found in the sarcolemma. It localises to the T-tubule. In terms of biological role, plays an essential role in the regulation of calcium transport at the sarcoplasmic reticulum (SR), which is secondarily required for regular muscle contraction. This chain is Sarcolamban A, found in Drosophila melanogaster (Fruit fly).